Consider the following 491-residue polypeptide: FAD-dependent monooxygenase cle3 (491 aa).

FAD contacts are provided by Glu-55, Gly-69, Arg-128, Asp-330, and Ala-343. N-linked (GlcNAc...) asparagine glycosylation occurs at Asn-380. The chain crosses the membrane as a helical span at residues Ser-462–Phe-482.

Belongs to the paxM FAD-dependent monooxygenase family. It depends on FAD as a cofactor.

It is found in the membrane. It functions in the pathway secondary metabolite biosynthesis; terpenoid biosynthesis. Functionally, FAD-dependent monooxygenase; part of the cluster A that mediates the biosynthesis of chevalone E and its oxidized derivatives that possess a unique five-membered lactone ring and can synergistically enhance the cytotoxicity of doxorubicin (DOX) in breast cancer cells. Within the pathway, cle3 takes part to the biosynthesis of the molecular scaffold by catalyzing the formation of an (S)-epoxide ring at the terminal olefin of the geranylgeranyl group. The molecular scaffold is commonly biosynthesized by a series of enzymes including the non-reducing polyketide synthase (NR-PKS) cle1 that produces the alpha-pyrone triacetic acid lactone (TAL); The membrane-bound prenyltransferase cle5 that accepts TAL as its substrate to perform a C-3 geranylgeranylation reaction, in which the pathway-dedicated GGPS cle6 is required to provide GGPP, the other substrate of cle5; the FAD-dependent monooxygenase Cle3 that forms an (S)-epoxide ring at the terminal olefin of the geranylgeranyl group; and the terpene cyclase Cle7 that catalyzes the cyclization of the prenyl group that yields the pentacyclic pathway intermediate chevalone E. Chevalone E can derivatize into seven new oxidized analogs by the cytochrome P450 monooxygenases cle2 (acting at C-20) and cle4 (acting at C-11 and C-12). The sequence is that of FAD-dependent monooxygenase cle3 from Aspergillus versicolor.